A 237-amino-acid polypeptide reads, in one-letter code: GrpE protein homolog, mitochondrial (237 aa).

It belongs to the GrpE family. In terms of assembly, probable component of the PAM complex at least composed of a mitochondrial HSP70 protein, GrpE, tim-44, tim-16 and tim-14/dnj-21.

The protein localises to the mitochondrion matrix. Functionally, essential component of the PAM complex, a complex required for the translocation of transit peptide-containing proteins from the inner membrane into the mitochondrial matrix in an ATP-dependent manner. Seems to control the nucleotide-dependent binding of mitochondrial HSP70 to substrate proteins. The chain is GrpE protein homolog, mitochondrial from Caenorhabditis elegans.